The following is a 229-amino-acid chain: Large ribosomal subunit protein uL1 (229 aa).

The protein belongs to the universal ribosomal protein uL1 family. As to quaternary structure, part of the 50S ribosomal subunit.

Binds directly to 23S rRNA. The L1 stalk is quite mobile in the ribosome, and is involved in E site tRNA release. Its function is as follows. Protein L1 is also a translational repressor protein, it controls the translation of the L11 operon by binding to its mRNA. In Histophilus somni (strain 2336) (Haemophilus somnus), this protein is Large ribosomal subunit protein uL1.